Consider the following 191-residue polypeptide: Peptidyl-tRNA hydrolase (191 aa).

Position 17 (Tyr-17) interacts with tRNA. The active-site Proton acceptor is His-22. Tyr-68, Asn-70, and Asn-116 together coordinate tRNA.

The protein belongs to the PTH family. Monomer.

The protein localises to the cytoplasm. It catalyses the reaction an N-acyl-L-alpha-aminoacyl-tRNA + H2O = an N-acyl-L-amino acid + a tRNA + H(+). Functionally, hydrolyzes ribosome-free peptidyl-tRNAs (with 1 or more amino acids incorporated), which drop off the ribosome during protein synthesis, or as a result of ribosome stalling. Its function is as follows. Catalyzes the release of premature peptidyl moieties from peptidyl-tRNA molecules trapped in stalled 50S ribosomal subunits, and thus maintains levels of free tRNAs and 50S ribosomes. This Francisella tularensis subsp. tularensis (strain FSC 198) protein is Peptidyl-tRNA hydrolase.